A 341-amino-acid chain; its full sequence is Elongation factor G (341 aa).

It belongs to the GTP-binding elongation factor family. EF-G/EF-2 subfamily.

The protein resides in the cytoplasm. Catalyzes the GTP-dependent ribosomal translocation step during translation elongation. During this step, the ribosome changes from the pre-translocational (PRE) to the post-translocational (POST) state as the newly formed A-site-bound peptidyl-tRNA and P-site-bound deacylated tRNA move to the P and E sites, respectively. Catalyzes the coordinated movement of the two tRNA molecules, the mRNA and conformational changes in the ribosome. The sequence is that of Elongation factor G (fus) from Streptomyces ramocissimus.